The primary structure comprises 301 residues: GTP cyclohydrolase FolE2 (301 aa).

The protein belongs to the GTP cyclohydrolase IV family.

It carries out the reaction GTP + H2O = 7,8-dihydroneopterin 3'-triphosphate + formate + H(+). It participates in cofactor biosynthesis; 7,8-dihydroneopterin triphosphate biosynthesis; 7,8-dihydroneopterin triphosphate from GTP: step 1/1. Its function is as follows. Converts GTP to 7,8-dihydroneopterin triphosphate. The chain is GTP cyclohydrolase FolE2 from Pseudomonas putida (strain GB-1).